Consider the following 462-residue polypeptide: UDP-N-acetylmuramate--L-alanine ligase (462 aa).

116 to 122 (GAHGKTT) contributes to the ATP binding site.

This sequence belongs to the MurCDEF family.

It is found in the cytoplasm. It catalyses the reaction UDP-N-acetyl-alpha-D-muramate + L-alanine + ATP = UDP-N-acetyl-alpha-D-muramoyl-L-alanine + ADP + phosphate + H(+). It functions in the pathway cell wall biogenesis; peptidoglycan biosynthesis. Its function is as follows. Cell wall formation. The polypeptide is UDP-N-acetylmuramate--L-alanine ligase (Desulforamulus reducens (strain ATCC BAA-1160 / DSM 100696 / MI-1) (Desulfotomaculum reducens)).